A 296-amino-acid chain; its full sequence is Release factor glutamine methyltransferase (296 aa).

S-adenosyl-L-methionine is bound by residues 133-137, Asp-156, and Asn-201; that span reads GTGSG. 201-204 is a substrate binding site; that stretch reads NPPY.

The protein belongs to the protein N5-glutamine methyltransferase family. PrmC subfamily.

It carries out the reaction L-glutaminyl-[peptide chain release factor] + S-adenosyl-L-methionine = N(5)-methyl-L-glutaminyl-[peptide chain release factor] + S-adenosyl-L-homocysteine + H(+). Functionally, methylates the class 1 translation termination release factors RF1/PrfA and RF2/PrfB on the glutamine residue of the universally conserved GGQ motif. The protein is Release factor glutamine methyltransferase of Rhodopirellula baltica (strain DSM 10527 / NCIMB 13988 / SH1).